The chain runs to 367 residues: Queuine tRNA-ribosyltransferase (367 aa).

The active-site Proton acceptor is aspartate 91. Residues 91–95 (DSGGF), aspartate 145, glutamine 188, and glycine 215 contribute to the substrate site. Residue aspartate 265 is the Nucleophile of the active site. The segment at 270–274 (TRVAR) is RNA binding; important for wobble base 34 recognition. Zn(2+) contacts are provided by cysteine 303, cysteine 305, cysteine 308, and histidine 334.

It belongs to the queuine tRNA-ribosyltransferase family. In terms of assembly, homodimer. Within each dimer, one monomer is responsible for RNA recognition and catalysis, while the other monomer binds to the replacement base PreQ1. The cofactor is Zn(2+).

It carries out the reaction 7-aminomethyl-7-carbaguanine + guanosine(34) in tRNA = 7-aminomethyl-7-carbaguanosine(34) in tRNA + guanine. It functions in the pathway tRNA modification; tRNA-queuosine biosynthesis. In terms of biological role, catalyzes the base-exchange of a guanine (G) residue with the queuine precursor 7-aminomethyl-7-deazaguanine (PreQ1) at position 34 (anticodon wobble position) in tRNAs with GU(N) anticodons (tRNA-Asp, -Asn, -His and -Tyr). Catalysis occurs through a double-displacement mechanism. The nucleophile active site attacks the C1' of nucleotide 34 to detach the guanine base from the RNA, forming a covalent enzyme-RNA intermediate. The proton acceptor active site deprotonates the incoming PreQ1, allowing a nucleophilic attack on the C1' of the ribose to form the product. After dissociation, two additional enzymatic reactions on the tRNA convert PreQ1 to queuine (Q), resulting in the hypermodified nucleoside queuosine (7-(((4,5-cis-dihydroxy-2-cyclopenten-1-yl)amino)methyl)-7-deazaguanosine). The polypeptide is Queuine tRNA-ribosyltransferase (Thermosipho africanus (strain TCF52B)).